Reading from the N-terminus, the 216-residue chain is Protein Syd (216 aa).

Belongs to the Syd family.

The protein resides in the cell inner membrane. In terms of biological role, interacts with the SecY protein in vivo. May bind preferentially to an uncomplexed state of SecY, thus functioning either as a chelating agent for excess SecY in the cell or as a regulatory factor that negatively controls the translocase function. The sequence is that of Protein Syd from Shewanella sp. (strain MR-4).